We begin with the raw amino-acid sequence, 290 residues long: Glycine--tRNA ligase alpha subunit (290 aa).

It belongs to the class-II aminoacyl-tRNA synthetase family. As to quaternary structure, tetramer of two alpha and two beta subunits.

It is found in the cytoplasm. It catalyses the reaction tRNA(Gly) + glycine + ATP = glycyl-tRNA(Gly) + AMP + diphosphate. This chain is Glycine--tRNA ligase alpha subunit, found in Desulfotalea psychrophila (strain LSv54 / DSM 12343).